Here is an 87-residue protein sequence, read N- to C-terminus: CRISPR-associated endoribonuclease Cas2 (87 aa).

Aspartate 8 is a binding site for Mg(2+).

Belongs to the CRISPR-associated endoribonuclease Cas2 protein family. As to quaternary structure, homodimer, forms a heterotetramer with a Cas1 homodimer. The cofactor is Mg(2+).

CRISPR (clustered regularly interspaced short palindromic repeat), is an adaptive immune system that provides protection against mobile genetic elements (viruses, transposable elements and conjugative plasmids). CRISPR clusters contain sequences complementary to antecedent mobile elements and target invading nucleic acids. CRISPR clusters are transcribed and processed into CRISPR RNA (crRNA). Functions as a ssRNA-specific endoribonuclease. Involved in the integration of spacer DNA into the CRISPR cassette. This chain is CRISPR-associated endoribonuclease Cas2, found in Frankia alni (strain DSM 45986 / CECT 9034 / ACN14a).